Reading from the N-terminus, the 572-residue chain is Probable lysosomal cobalamin transporter (572 aa).

9 consecutive transmembrane segments (helical) span residues 8 to 28 (VIWF…SVFI), 40 to 60 (FVTF…MLLP), 95 to 115 (IIYY…IPFA), 145 to 165 (TLTF…APMM), 188 to 208 (AFTF…AFYT), 314 to 334 (GGFC…MTVV), 374 to 394 (IIFA…VVAV), 421 to 441 (AVLT…LVPG), and 499 to 519 (VALN…LFLA). Residues 522–544 (GRRRGRGRESVSKHQKKRQSYMR) are disordered.

This sequence belongs to the LIMR family. LMBRD1 subfamily.

The protein localises to the lysosome membrane. Functionally, probable lysosomal cobalamin transporter. Required to export cobalamin from lysosomes allowing its conversion to cofactors. This Aspergillus fumigatus (strain ATCC MYA-4609 / CBS 101355 / FGSC A1100 / Af293) (Neosartorya fumigata) protein is Probable lysosomal cobalamin transporter.